The primary structure comprises 148 residues: Snaclec crotocetin (148 aa).

The N-terminal stretch at 1–23 is a signal peptide; the sequence is MGRLVFVSFGLLVVFLSLTGTGA. 3 cysteine pairs are disulfide-bonded: cysteine 27-cysteine 38, cysteine 55-cysteine 144, and cysteine 121-cysteine 136. Residues 34-145 form the C-type lectin domain; sequence YEGHCYKVFK…CSKTHKVVCK (112 aa).

This sequence belongs to the snaclec family. Heterodimer; disulfide-linked. In terms of tissue distribution, expressed by the venom gland.

It is found in the secreted. Functionally, interferes with one step of hemostasis (modulation of platelet aggregation, or coagulation cascade, for example). The chain is Snaclec crotocetin from Crotalus durissus terrificus (South American rattlesnake).